The chain runs to 113 residues: uncharacterized protein (113 aa).

This is an uncharacterized protein from Methanocaldococcus jannaschii (strain ATCC 43067 / DSM 2661 / JAL-1 / JCM 10045 / NBRC 100440) (Methanococcus jannaschii).